The sequence spans 155 residues: RNA-binding protein 3 (155 aa).

One can recognise an RRM domain in the interval 6–84 (GKLFVGGLNF…RQIRVDHAGK (79 aa)). Arg47 is subject to Omega-N-methylarginine. Residues 79–155 (VDHAGKSARG…GGNYRDNYDN (77 aa)) form a disordered region. Arg105 bears the Asymmetric dimethylarginine; alternate mark. Arg105 is subject to Dimethylated arginine; alternate. Position 105 is an omega-N-methylarginine; alternate (Arg105). The segment covering 105 to 114 (RGGGDQGYGS) has biased composition (gly residues). An omega-N-methylarginine mark is found at Arg120 and Arg130. Ser135 and Ser145 each carry phosphoserine. The residue at position 153 (Tyr153) is a Phosphotyrosine.

In terms of assembly, interacts with RPL4. Associates with the 60S ribosomal subunits. Post-translationally, arg-105 is dimethylated, probably to asymmetric dimethylarginine. Phosphorylated. Isoform 2 is methylated. As to expression, widely expressed in the brain. Highly expressed in the cerebellum and olfactory bulb (at protein level). Expressed in neurons and glial cells.

The protein localises to the nucleus. It localises to the cytoplasm. It is found in the cell projection. Its subcellular location is the dendrite. In terms of biological role, cold-inducible mRNA binding protein that enhances global protein synthesis at both physiological and mild hypothermic temperatures. Reduces the relative abundance of microRNAs, when overexpressed. Enhances phosphorylation of translation initiation factors and active polysome formation. The protein is RNA-binding protein 3 (Rbm3) of Rattus norvegicus (Rat).